The sequence spans 348 residues: uncharacterized protein (348 aa).

Residues 132-348 (SECRRSSDAL…QGTRRDSARL (217 aa)) form a disordered region. The segment covering 161–178 (STAPIPNAAISSARSSAR) has biased composition (low complexity). A compositionally biased stretch (polar residues) spans 192-207 (SRSSSETRSPGGTVQP). Residues 227–273 (AAGSLLPAPRPPASSASSPQAAAPAAPSATRLPRRTTPSAPRPSSRP) are compositionally biased toward low complexity. A compositionally biased stretch (pro residues) spans 274-287 (ARPPIPAARPPPRR). Positions 288 to 310 (TPGTPRPAAARARAPAGCSPARR) are enriched in low complexity.

This is an uncharacterized protein from Streptomyces fradiae (Streptomyces roseoflavus).